The sequence spans 206 residues: Ribosomal RNA small subunit methyltransferase G (206 aa).

Residues Gly-73, Leu-78, 124 to 125 (VE), and Arg-139 contribute to the S-adenosyl-L-methionine site.

This sequence belongs to the methyltransferase superfamily. RNA methyltransferase RsmG family.

The protein localises to the cytoplasm. It carries out the reaction guanosine(527) in 16S rRNA + S-adenosyl-L-methionine = N(7)-methylguanosine(527) in 16S rRNA + S-adenosyl-L-homocysteine. Functionally, specifically methylates the N7 position of guanine in position 527 of 16S rRNA. The protein is Ribosomal RNA small subunit methyltransferase G of Idiomarina loihiensis (strain ATCC BAA-735 / DSM 15497 / L2-TR).